A 317-amino-acid polypeptide reads, in one-letter code: MSVRTQSSEEPAETVHRAGFACFVGRPNAGKSTLTNALVGQKVAITSNRPQTTRHTVRGIVHREDAQLILVDTPGLHKPRTLLGERLNDVVRTTWAEVDVIGFCLPANEKLGPGDRFIAKELAGIRKTPKVAIVTKTDLVDSKTLAEQLIAIDQLGKELGIAWAEIVPVSATANQQVDLLADLLTPLLPEGPALYPEGDLTDEPEQVMVAELIREAALEGVRDELPHSIAVVVEEMLPREDRPADKPLLDIHANVYIERPSQKGIIIGPKGKRLKDVGIKSRTQIEALLGTPVFLDLHVKVAKDWQRDPKQLRRLGF.

In terms of domain architecture, Era-type G spans 17–190 (RAGFACFVGR…ADLLTPLLPE (174 aa)). A G1 region spans residues 25-32 (GRPNAGKS). 25-32 (GRPNAGKS) provides a ligand contact to GTP. The interval 51-55 (QTTRH) is G2. The segment at 72-75 (DTPG) is G3. GTP contacts are provided by residues 72-76 (DTPGL) and 135-138 (TKTD). Residues 135 to 138 (TKTD) are G4. The segment at 169–171 (VSA) is G5. The 83-residue stretch at 221 to 303 (VRDELPHSIA…FLDLHVKVAK (83 aa)) folds into the KH type-2 domain.

Belongs to the TRAFAC class TrmE-Era-EngA-EngB-Septin-like GTPase superfamily. Era GTPase family. As to quaternary structure, monomer.

The protein localises to the cytoplasm. The protein resides in the cell membrane. Its function is as follows. An essential GTPase that binds both GDP and GTP, with rapid nucleotide exchange. Plays a role in 16S rRNA processing and 30S ribosomal subunit biogenesis and possibly also in cell cycle regulation and energy metabolism. The sequence is that of GTPase Era from Streptomyces coelicolor (strain ATCC BAA-471 / A3(2) / M145).